The primary structure comprises 352 residues: Nicotinate-nucleotide--dimethylbenzimidazole phosphoribosyltransferase (352 aa).

Glutamate 316 functions as the Proton acceptor in the catalytic mechanism.

Belongs to the CobT family.

It catalyses the reaction 5,6-dimethylbenzimidazole + nicotinate beta-D-ribonucleotide = alpha-ribazole 5'-phosphate + nicotinate + H(+). Its pathway is nucleoside biosynthesis; alpha-ribazole biosynthesis; alpha-ribazole from 5,6-dimethylbenzimidazole: step 1/2. Catalyzes the synthesis of alpha-ribazole-5'-phosphate from nicotinate mononucleotide (NAMN) and 5,6-dimethylbenzimidazole (DMB). In Clostridium acetobutylicum (strain ATCC 824 / DSM 792 / JCM 1419 / IAM 19013 / LMG 5710 / NBRC 13948 / NRRL B-527 / VKM B-1787 / 2291 / W), this protein is Nicotinate-nucleotide--dimethylbenzimidazole phosphoribosyltransferase.